The primary structure comprises 218 residues: Acetoacetyl-CoA:acetate/butyrate CoA transferase alpha subunit (218 aa).

Position 24-30 (24-30 (GGFLNCG)) interacts with CoA.

The protein belongs to the 3-oxoacid CoA-transferase subunit A family. As to quaternary structure, heterotetramer composed of two alpha subunits (CtfA) and two beta subunits (CtfB).

The catalysed reaction is acetoacetate + butanoyl-CoA = acetoacetyl-CoA + butanoate. It catalyses the reaction acetoacetate + acetyl-CoA = acetoacetyl-CoA + acetate. With respect to regulation, the acetate and butyrate conversion reactions are inhibited in vitro by physiological levels of acetone and butanol. Its function is as follows. Catalyzes the transfer of CoA from acetoacetyl-CoA to acetate, butyrate and propionate. Also shows low activity with valerate, isobutyrate and crotonate. Plays an important role in the metabolic shift between the acid-producing and solvent-forming states of C.acetobutylicum. Acts mainly to detoxify the medium by removing the acetate and butyrate excreted earlier in the fermentation. The polypeptide is Acetoacetyl-CoA:acetate/butyrate CoA transferase alpha subunit (Clostridium acetobutylicum (strain ATCC 824 / DSM 792 / JCM 1419 / IAM 19013 / LMG 5710 / NBRC 13948 / NRRL B-527 / VKM B-1787 / 2291 / W)).